The primary structure comprises 334 residues: WD repeat-containing protein 54 (334 aa).

3 WD repeats span residues 162–206 (GHQM…TLLT), 208–247 (IPGF…LHVQ), and 250–289 (AHAR…ESGY).

As to quaternary structure, homodimer and homotrimer; forms tight forms of dimers and trimers. Interacts with IZUMO1 and IZUMO1R/JUNO. Post-translationally, cross-linked to tightly form both dimers and trimers by TGM2. Cross-linking enhances the activation of EGF receptor-mediated signaling pathway. Cross-linking is inhibited by EGF. In terms of processing, ubiquitinated. EGF increases ubiquitination. In terms of tissue distribution, expressed in epithelial cells (at protein level). Isoform 3 expression is highly increased in colorectal cancer cells.

Its subcellular location is the vesicle. It is found in the cytoplasm. It localises to the cell membrane. Functionally, plays a role in the adhesion and fusion of the sperm-oocyte membrane through its interactions with IZUMO1 and IZUMO1R/JUNO. When cross-linked to form dimers and trimers, it has a regulatory effect on ERK signaling pathway activity in response to EGF stimulation. Colocalizes with the EGF receptor in WDR54-specific vesicle where it sustains the internalization and controls the degradation of the EGF receptor after EGF stimulation. The chain is WD repeat-containing protein 54 from Homo sapiens (Human).